A 128-amino-acid chain; its full sequence is Protein ripply2 (128 aa).

The disordered stretch occupies residues 1-63; it reads MENAGGAEGT…HAAEAMPDGP (63 aa). Positions 9 to 22 are enriched in low complexity; the sequence is GTESGAAACAATDG. The short motif at 37 to 40 is the WRPW motif element; it reads WRPW. A ripply homology domain region spans residues 77–112; the sequence is HPVRLFWPKSKCYDYLYQEAEALLKNFPIQATISFY.

Belongs to the ripply family.

It is found in the nucleus. Plays a role in somitogenesis. Required for somite segregation and establishment of rostrocaudal polarity in somites. This is Protein ripply2 (RIPPLY2) from Homo sapiens (Human).